The sequence spans 158 residues: Ankyrin repeat domain-containing protein 37 (158 aa).

ANK repeat units lie at residues 1-25, 30-59, and 63-92; these read MLLLDCNPEVDGLKHLLETGASVNA, CKQSPVHLAAGSGLACFLLWQLQTGADLNQ, and LGEAPLHKAAKVGSLECLSLLVASDAQIDL. The Nuclear localization signal motif lies at 129-149; sequence EHPDRNDCVAVLRQKRSLGSV.

Ubiquitinated by the CRL2(FEM1B) complex, leading to its degradation. In terms of tissue distribution, mainly expressed in testis, small intestine, colon, blood leukocytes and in pancreatic adenocarcinoma cells.

The protein resides in the nucleus. It localises to the cytoplasm. This Homo sapiens (Human) protein is Ankyrin repeat domain-containing protein 37.